A 408-amino-acid polypeptide reads, in one-letter code: 2-acyl-4-prenylphloroglucinol 6-prenyltransferase, chloroplastic (408 aa).

A chloroplast-targeting transit peptide spans 1–46 (MELSSACNLSLKPNYYYYPTSLFPSNNSYNNLKASSYYQTQRPIKC). 9 consecutive transmembrane segments (helical) span residues 119–139 (PIPFVAVSIICTSLFGAELLK), 146–166 (WQLMFDAFQGLVVILLYHIYI), 193–213 (SVKSAWFLTIFSAVASLLLMI), 217–237 (CGLFLTCMYCCYLVIGAMYSV), 257–277 (IGIGINFLINYASRATLGLPF), 281–301 (PPFTFIIGFVSTLSIILSILK), 326–346 (IVLVGSGFFLLNYVAAIGVAI), 355–375 (YIMIPAHAIFASALIFKTWLL), and 388–408 (YYHFLWFLMIAEYILYPFIST).

Belongs to the UbiA prenyltransferase family. Homo- and heteromer. Interacts with PT1L, forming a functional metabolon. Mg(2+) serves as cofactor. Expressed in trichomes.

The protein resides in the plastid. It is found in the chloroplast membrane. It catalyses the reaction a 2-acyl-4-prenylphloroglucinol + dimethylallyl diphosphate = a 2-acyl-4,6-diprenylphloroglucinol + diphosphate. It carries out the reaction a 2-acyl-4,6-diprenylphloroglucinol + dimethylallyl diphosphate = a 2-acyl-4,6,6-triprenylphloroglucinol + diphosphate. Its pathway is secondary metabolite biosynthesis. Functionally, involved in the biosynthesis of prenylated phenolics natural products which contribute to the bitter taste of beer and display broad biological activities. Catalyzes the two last prenylation steps in the beta-bitter acid pathway. Uses dimethylallyl diphosphate (DMAPP) as the prenyl donor. The polypeptide is 2-acyl-4-prenylphloroglucinol 6-prenyltransferase, chloroplastic (Humulus lupulus (European hop)).